Reading from the N-terminus, the 988-residue chain is UvrABC system protein A (988 aa).

Residue 33-40 (GLSGSGKS) participates in ATP binding. Residues 255–282 (CPVCDYSLPELEPRLFSFNAPVGACPSC) form a C4-type zinc finger. ABC transporter domains follow at residues 312 to 589 (WDRR…PRSL) and 609 to 938 (PNPK…QFLA). 642–649 (GVSGSGKS) contributes to the ATP binding site. Residues 741–767 (CEACQGDGMIKVEMHFLPDVYVPCDVC) form a C4-type zinc finger. The segment at 948 to 988 (ETRPAAMANKPDARPPRKVKPEKVAKATKTATKKTAKKKAS) is disordered. Positions 958 to 972 (PDARPPRKVKPEKVA) are enriched in basic and acidic residues. Basic residues predominate over residues 978 to 988 (ATKKTAKKKAS).

It belongs to the ABC transporter superfamily. UvrA family. In terms of assembly, forms a heterotetramer with UvrB during the search for lesions.

It is found in the cytoplasm. The UvrABC repair system catalyzes the recognition and processing of DNA lesions. UvrA is an ATPase and a DNA-binding protein. A damage recognition complex composed of 2 UvrA and 2 UvrB subunits scans DNA for abnormalities. When the presence of a lesion has been verified by UvrB, the UvrA molecules dissociate. The chain is UvrABC system protein A from Xanthomonas campestris pv. campestris (strain ATCC 33913 / DSM 3586 / NCPPB 528 / LMG 568 / P 25).